The following is a 261-amino-acid chain: Putative [LysW]-aminoadipate/[LysW]-glutamate kinase (261 aa).

Substrate is bound by residues 35 to 36, R62, and N162; that span reads GG.

It belongs to the acetylglutamate kinase family. LysZ subfamily.

The protein localises to the cytoplasm. It catalyses the reaction [amino-group carrier protein]-C-terminal-N-(1,4-dicarboxybutan-1-yl)-L-glutamine + ATP = [amino-group carrier protein]-C-terminal-N-(1-carboxy-5-phosphooxy-5-oxopentan-1-yl)-L-glutamine + ADP. The enzyme catalyses [amino-group carrier protein]-C-terminal-gamma-(L-glutamyl)-L-glutamate + ATP = [amino-group carrier protein]-C-terminal-gamma-(5-phospho-L-glutamyl)-L-glutamate + ADP. It participates in amino-acid biosynthesis; L-lysine biosynthesis via AAA pathway; L-lysine from L-alpha-aminoadipate (Thermus route): step 2/5. The protein operates within amino-acid biosynthesis; L-arginine biosynthesis. Involved in both the arginine and lysine biosynthetic pathways. Phosphorylates the LysW-bound precursors glutamate (for arginine biosynthesis), respectively alpha-aminoadipate (for lysine biosynthesis). The polypeptide is Putative [LysW]-aminoadipate/[LysW]-glutamate kinase (Pyrobaculum aerophilum (strain ATCC 51768 / DSM 7523 / JCM 9630 / CIP 104966 / NBRC 100827 / IM2)).